Here is a 301-residue protein sequence, read N- to C-terminus: Mitochondrial carnitine/acylcarnitine carrier protein (301 aa).

N-acetylalanine is present on alanine 2. Topologically, residues 2–12 (ADQPKPISPLK) are cytoplasmic. Solcar repeat units follow at residues 8 to 99 (ISPL…GKKL), 108 to 196 (LSYP…VKNI), and 207 to 293 (LSVP…AMKF). A helical transmembrane segment spans residues 13-31 (NLLAGGFGGVCLVFVGHPL). At 32-73 (DTVKVRLQTQPPSLPGQPPMYSGTFDCFRKTLFREGIRGLYR) the chain is on the mitochondrial matrix side. A helical membrane pass occupies residues 74-93 (GMAAPIIGVTPMFAVCFFGF). At 94 to 112 (GLGKKLQQKHPEDVLSYPQ) the chain is on the cytoplasmic side. The helical transmembrane segment at 113 to 131 (LFAAGMLSGIFTTGIMTPG) threads the bilayer. At 132-170 (ERIKCLLQIQASSGETKYTGTLDCAKKLYQEFGIRGIYK) the chain is on the mitochondrial matrix side. An N6-acetyllysine mark is found at lysine 148 and lysine 157. At lysine 170 the chain carries N6-acetyllysine; alternate. The residue at position 170 (lysine 170) is an N6-succinyllysine; alternate. A helical transmembrane segment spans residues 171-190 (GTVVTLMRDVPASGMYFMTY). At 191–211 (EWVKNIFTPEGKRVSELSVPR) the chain is on the cytoplasmic side. Residues 212–230 (VLVAGGIAGIFNWAVAIPP) traverse the membrane as a helical segment. Residues 231-267 (DVLKSRFQTAPPGKYPNGFRDVLRELIPDEGVTSLYK) lie on the Mitochondrial matrix side of the membrane. The helical transmembrane segment at 268–287 (GFNAVMIRAFPANAACFLGF) threads the bilayer. The Cytoplasmic portion of the chain corresponds to 288-301 (EVAMKFLNWATPNL).

The protein belongs to the mitochondrial carrier (TC 2.A.29) family.

It is found in the mitochondrion inner membrane. The catalysed reaction is O-acetyl-(R)-carnitine(in) + (R)-carnitine(out) = O-acetyl-(R)-carnitine(out) + (R)-carnitine(in). The enzyme catalyses an O-acyl-(R)-carnitine(in) + (R)-carnitine(out) = an O-acyl-(R)-carnitine(out) + (R)-carnitine(in). It carries out the reaction O-propanoyl-(R)-carnitine(in) + (R)-carnitine(out) = O-propanoyl-(R)-carnitine(out) + (R)-carnitine(in). It catalyses the reaction O-hexadecanoyl-(R)-carnitine(in) + (R)-carnitine(out) = O-hexadecanoyl-(R)-carnitine(out) + (R)-carnitine(in). The catalysed reaction is O-octanoyl-(R)-carnitine(in) + (R)-carnitine(out) = O-octanoyl-(R)-carnitine(out) + (R)-carnitine(in). The enzyme catalyses (R)-carnitine(in) = (R)-carnitine(out). In terms of biological role, mediates the electroneutral exchange of acylcarnitines (O-acyl-(R)-carnitine or L-acylcarnitine) of different acyl chain lengths (ranging from O-acetyl-(R)-carnitine to long-chain O-acyl-(R)-carnitines) with free carnitine ((R)-carnitine or L-carnitine) across the mitochondrial inner membrane, via a ping-pong mechanism. Key player in the mitochondrial oxidation pathway, it translocates the fatty acids in the form of acylcarnitines into the mitochondrial matrix, where the carnitine palmitoyltransferase 2 (CPT-2) activates them to undergo fatty acid beta-oxidation. Catalyzes the unidirectional transport (uniport) of carnitine at lower rates than the antiport (exchange). The protein is Mitochondrial carnitine/acylcarnitine carrier protein (SLC25A20) of Macaca fascicularis (Crab-eating macaque).